Reading from the N-terminus, the 254-residue chain is Alcohol dehydrogenase (254 aa).

Residue 10-33 (FVAGLGGIGLDTSREIVKSGPKNL) participates in NAD(+) binding. Ser-138 provides a ligand contact to substrate. The Proton acceptor role is filled by Tyr-151.

The protein belongs to the short-chain dehydrogenases/reductases (SDR) family. Homodimer.

The enzyme catalyses a primary alcohol + NAD(+) = an aldehyde + NADH + H(+). It carries out the reaction a secondary alcohol + NAD(+) = a ketone + NADH + H(+). The protein is Alcohol dehydrogenase (Adh1) of Drosophila lacicola (Fruit fly).